A 455-amino-acid chain; its full sequence is UDP-N-acetylmuramoyl-tripeptide--D-alanyl-D-alanine ligase (455 aa).

107-113 (GSCGKTS) lines the ATP pocket.

It belongs to the MurCDEF family. MurF subfamily.

It is found in the cytoplasm. The catalysed reaction is D-alanyl-D-alanine + UDP-N-acetyl-alpha-D-muramoyl-L-alanyl-gamma-D-glutamyl-meso-2,6-diaminopimelate + ATP = UDP-N-acetyl-alpha-D-muramoyl-L-alanyl-gamma-D-glutamyl-meso-2,6-diaminopimeloyl-D-alanyl-D-alanine + ADP + phosphate + H(+). It participates in cell wall biogenesis; peptidoglycan biosynthesis. Functionally, involved in cell wall formation. Catalyzes the final step in the synthesis of UDP-N-acetylmuramoyl-pentapeptide, the precursor of murein. The chain is UDP-N-acetylmuramoyl-tripeptide--D-alanyl-D-alanine ligase from Buchnera aphidicola subsp. Acyrthosiphon pisum (strain APS) (Acyrthosiphon pisum symbiotic bacterium).